The following is a 185-amino-acid chain: ATP synthase subunit b, chloroplastic (185 aa).

Residues 7–29 (SFVYLVGHCPFAGSFAFNTDILA) traverse the membrane as a helical segment.

Belongs to the ATPase B chain family. As to quaternary structure, F-type ATPases have 2 components, F(1) - the catalytic core - and F(0) - the membrane proton channel. F(1) has five subunits: alpha(3), beta(3), gamma(1), delta(1), epsilon(1). F(0) has four main subunits: a(1), b(1), b'(1) and c(10-14). The alpha and beta chains form an alternating ring which encloses part of the gamma chain. F(1) is attached to F(0) by a central stalk formed by the gamma and epsilon chains, while a peripheral stalk is formed by the delta, b and b' chains.

The protein resides in the plastid. The protein localises to the chloroplast thylakoid membrane. Functionally, f(1)F(0) ATP synthase produces ATP from ADP in the presence of a proton or sodium gradient. F-type ATPases consist of two structural domains, F(1) containing the extramembraneous catalytic core and F(0) containing the membrane proton channel, linked together by a central stalk and a peripheral stalk. During catalysis, ATP synthesis in the catalytic domain of F(1) is coupled via a rotary mechanism of the central stalk subunits to proton translocation. Component of the F(0) channel, it forms part of the peripheral stalk, linking F(1) to F(0). This is ATP synthase subunit b, chloroplastic from Dioscorea elephantipes (Elephant's foot yam).